Here is a 209-residue protein sequence, read N- to C-terminus: Uracil phosphoribosyltransferase (209 aa).

5-phospho-alpha-D-ribose 1-diphosphate-binding positions include Arg79, Arg104, and 131-139 (DPMLATGGS). Uracil-binding positions include Ile194 and 199–201 (GDA). Residue Asp200 participates in 5-phospho-alpha-D-ribose 1-diphosphate binding.

It belongs to the UPRTase family. The cofactor is Mg(2+).

It carries out the reaction UMP + diphosphate = 5-phospho-alpha-D-ribose 1-diphosphate + uracil. It functions in the pathway pyrimidine metabolism; UMP biosynthesis via salvage pathway; UMP from uracil: step 1/1. Its activity is regulated as follows. Allosterically activated by GTP. Catalyzes the conversion of uracil and 5-phospho-alpha-D-ribose 1-diphosphate (PRPP) to UMP and diphosphate. The polypeptide is Uracil phosphoribosyltransferase (Lachnoclostridium phytofermentans (strain ATCC 700394 / DSM 18823 / ISDg) (Clostridium phytofermentans)).